Reading from the N-terminus, the 37-residue chain is Ice-structuring protein 3 (37 aa).

Belongs to the type-I AFP family.

Its function is as follows. Contributes to protect fish blood from freezing at subzero sea water temperatures. Lowers the blood freezing point. Binds to nascent ice crystals and prevents further growth. This is Ice-structuring protein 3 from Pseudopleuronectes americanus (Winter flounder).